The sequence spans 398 residues: uncharacterized protein (398 aa).

In terms of domain architecture, Radical SAM core spans 21 to 253; sequence TNFGPTNLII…WQLTSTSEPE (233 aa). [4Fe-4S] cluster-binding residues include Cys-37, Cys-41, and Cys-44.

This sequence belongs to the radical SAM superfamily. Anaerobic sulfatase-maturating enzyme family. [4Fe-4S] cluster serves as cofactor.

This is an uncharacterized protein from Synechocystis sp. (strain ATCC 27184 / PCC 6803 / Kazusa).